The chain runs to 105 residues: Co-chaperonin GroES (105 aa).

This sequence belongs to the GroES chaperonin family. Heptamer of 7 subunits arranged in a ring. Interacts with the chaperonin GroEL.

The protein localises to the cytoplasm. Its function is as follows. Together with the chaperonin GroEL, plays an essential role in assisting protein folding. The GroEL-GroES system forms a nano-cage that allows encapsulation of the non-native substrate proteins and provides a physical environment optimized to promote and accelerate protein folding. GroES binds to the apical surface of the GroEL ring, thereby capping the opening of the GroEL channel. The chain is Co-chaperonin GroES from Parvibaculum lavamentivorans (strain DS-1 / DSM 13023 / NCIMB 13966).